A 289-amino-acid polypeptide reads, in one-letter code: Acetyl-coenzyme A carboxylase carboxyl transferase subunit beta (289 aa).

Residues 28–289 (VMTKCPKCKK…QGGEMAVWQS (262 aa)) form the CoA carboxyltransferase N-terminal domain. Cysteine 32, cysteine 35, cysteine 51, and cysteine 54 together coordinate Zn(2+). The C4-type zinc-finger motif lies at 32–54 (CPKCKKIMYTKEVLKNLKVCVNC).

The protein belongs to the AccD/PCCB family. In terms of assembly, acetyl-CoA carboxylase is a heterohexamer composed of biotin carboxyl carrier protein (AccB), biotin carboxylase (AccC) and two subunits each of ACCase subunit alpha (AccA) and ACCase subunit beta (AccD). Zn(2+) serves as cofactor.

It is found in the cytoplasm. The catalysed reaction is N(6)-carboxybiotinyl-L-lysyl-[protein] + acetyl-CoA = N(6)-biotinyl-L-lysyl-[protein] + malonyl-CoA. Its pathway is lipid metabolism; malonyl-CoA biosynthesis; malonyl-CoA from acetyl-CoA: step 1/1. Component of the acetyl coenzyme A carboxylase (ACC) complex. Biotin carboxylase (BC) catalyzes the carboxylation of biotin on its carrier protein (BCCP) and then the CO(2) group is transferred by the transcarboxylase to acetyl-CoA to form malonyl-CoA. This Bacillus anthracis (strain A0248) protein is Acetyl-coenzyme A carboxylase carboxyl transferase subunit beta.